A 363-amino-acid polypeptide reads, in one-letter code: 3-isopropylmalate dehydrogenase (363 aa).

79–92 contributes to the NAD(+) binding site; it reads GPKWEHLPPNDQPE. The substrate site is built by Arg100, Arg110, Arg139, and Asp228. Positions 228, 252, and 256 each coordinate Mg(2+). 286-298 is a binding site for NAD(+); it reads GSAPDIAGKNIAN.

It belongs to the isocitrate and isopropylmalate dehydrogenases family. LeuB type 1 subfamily. As to quaternary structure, homodimer. Mg(2+) is required as a cofactor. The cofactor is Mn(2+).

Its subcellular location is the cytoplasm. It carries out the reaction (2R,3S)-3-isopropylmalate + NAD(+) = 4-methyl-2-oxopentanoate + CO2 + NADH. It functions in the pathway amino-acid biosynthesis; L-leucine biosynthesis; L-leucine from 3-methyl-2-oxobutanoate: step 3/4. Functionally, catalyzes the oxidation of 3-carboxy-2-hydroxy-4-methylpentanoate (3-isopropylmalate) to 3-carboxy-4-methyl-2-oxopentanoate. The product decarboxylates to 4-methyl-2 oxopentanoate. The chain is 3-isopropylmalate dehydrogenase from Vibrio vulnificus (strain CMCP6).